The primary structure comprises 264 residues: MKSIKRIGLCISLLILIIFVTSCDGDNKITGDSKEEQIKKSFAKTLEMYPIKNLEDLYDKEGYRDGEFKKGDKGTWVIRSEMKIQLKGENLESRGVVLEINRNTRTAKGNYIVREVVEDSDGMTHNHTKRYPVKMENNKIIPLKQIVDEKVKKEIEEFKFFVQYGNFKELENYKDGEVTYNPEAPIYSAQYQLKNSDYNVEQLRKRYNIPTQKAPKLLLKGSGNLKGSSVGYKNIEFTFVENKGENIYFTDSVYFNPSEDKYNY.

A signal peptide spans Met1–Ser22. A lipid anchor (N-palmitoyl cysteine) is attached at Cys23. Residue Cys23 is the site of S-diacylglycerol cysteine attachment.

The protein belongs to the staphylococcal tandem lipoprotein family.

Its subcellular location is the cell membrane. This is an uncharacterized protein from Staphylococcus aureus (strain MRSA252).